The chain runs to 348 residues: Dihydroorotate dehydrogenase (quinone) (348 aa).

FMN is bound by residues 60–64 and T84; that span reads AGLDK. Residue K64 participates in substrate binding. Residue 109–113 participates in substrate binding; that stretch reads NRMGF. 2 residues coordinate FMN: N137 and N170. Position 170 (N170) interacts with substrate. The active-site Nucleophile is S173. Position 175 (N175) interacts with substrate. Residues K215 and T243 each coordinate FMN. 244–245 contributes to the substrate binding site; sequence NT. Residues G266, G295, and 316–317 each bind FMN; that span reads YS.

Belongs to the dihydroorotate dehydrogenase family. Type 2 subfamily. In terms of assembly, monomer. Requires FMN as cofactor.

Its subcellular location is the cell membrane. It catalyses the reaction (S)-dihydroorotate + a quinone = orotate + a quinol. The protein operates within pyrimidine metabolism; UMP biosynthesis via de novo pathway; orotate from (S)-dihydroorotate (quinone route): step 1/1. Functionally, catalyzes the conversion of dihydroorotate to orotate with quinone as electron acceptor. The sequence is that of Dihydroorotate dehydrogenase (quinone) from Nitrosospira multiformis (strain ATCC 25196 / NCIMB 11849 / C 71).